A 310-amino-acid chain; its full sequence is Low-salt glycan biosynthesis protein Agl12 (310 aa).

NAD(+)-binding positions include 7 to 13 (GGAGFIG), 32 to 35 (DALT), and 58 to 59 (DI). S82 provides a ligand contact to substrate. T97 lines the NAD(+) pocket. Residues T122 and 122-124 (TDE) contribute to the substrate site. D123 serves as the catalytic Proton donor. Residues E124 and Y146 each act as proton acceptor in the active site. NAD(+) is bound at residue 146–150 (YSATK). A substrate-binding site is contributed by N175. N176 contributes to the NAD(+) binding site. Substrate-binding positions include 185–186 (KL), 201–203 (PVY), R210, N245, and 269–272 (RAGH).

This sequence belongs to the NAD(P)-dependent epimerase/dehydratase family. dTDP-glucose dehydratase subfamily. It depends on NAD(+) as a cofactor.

It functions in the pathway protein modification; protein glycosylation. The protein operates within cell surface structure biogenesis; S-layer biogenesis. Lyase involved in N-glycan biosynthetic pathway that takes place under low-salt conditions (1.75 M instead of 3.4 M). Participates in the formation of the tetrasaccharide present at 'Asn-532' of S-layer glycoprotein Csg, consisting of a sulfated hexose, 2 hexoses and rhamnose. Involved in the addition of final rhamnose (sugar 4) of the tetrasaccharide on the dolichol phosphate carrier. The protein is Low-salt glycan biosynthesis protein Agl12 (agl12) of Haloferax volcanii (strain ATCC 29605 / DSM 3757 / JCM 8879 / NBRC 14742 / NCIMB 2012 / VKM B-1768 / DS2) (Halobacterium volcanii).